Here is a 305-residue protein sequence, read N- to C-terminus: Major pollen allergen Pha a 5.2 (305 aa).

The first 25 residues, 1–25, serve as a signal peptide directing secretion; that stretch reads MAVQKYTVALFLAVALVAGPAALYA. Positions 65 to 85 are enriched in basic and acidic residues; that stretch reads GLNEEKNAARQTDDEQKRSDE. Disordered stretches follow at residues 65-87 and 279-299; these read GLNE…DEIN and STAT…PAAV.

The protein belongs to the Poa p IX/Phl p VI allergen family.

This Phalaris aquatica (Canary grass) protein is Major pollen allergen Pha a 5.2.